A 130-amino-acid chain; its full sequence is uncharacterized protein (130 aa).

The residue at position 1 (Met-1) is an N-acetylmethionine.

As to quaternary structure, homotetramer.

This is an uncharacterized protein from Arabidopsis thaliana (Mouse-ear cress).